The chain runs to 399 residues: Tryptophan synthase beta chain (399 aa).

Lys-92 carries the post-translational modification N6-(pyridoxal phosphate)lysine.

The protein belongs to the TrpB family. Tetramer of two alpha and two beta chains. It depends on pyridoxal 5'-phosphate as a cofactor.

It carries out the reaction (1S,2R)-1-C-(indol-3-yl)glycerol 3-phosphate + L-serine = D-glyceraldehyde 3-phosphate + L-tryptophan + H2O. It participates in amino-acid biosynthesis; L-tryptophan biosynthesis; L-tryptophan from chorismate: step 5/5. Functionally, the beta subunit is responsible for the synthesis of L-tryptophan from indole and L-serine. The polypeptide is Tryptophan synthase beta chain (Nitrosomonas eutropha (strain DSM 101675 / C91 / Nm57)).